A 397-amino-acid polypeptide reads, in one-letter code: Growth-regulating factor 1 (397 aa).

Positions 18–53 (PFTASQWQELEHQALIYKYMASGTPIPSDLILPLRR) constitute a QLQ domain. 2 short sequence motifs (bipartite nuclear localization signal) span residues 86–105 (RKAEDPEPGRCRRTDGKKWR) and 123–130 (RGKNRSRK). Residues 90–134 (DPEPGRCRRTDGKKWRCSKEAYPDSKYCEKHMHRGKNRSRKPVEM) form the WRC domain. The tract at residues 117–176 (CEKHMHRGKNRSRKPVEMSLATPPPPSSSATSAASNTSAGVAPTTTTTSSPAPSYSRPAP) is disordered. A compositionally biased stretch (basic residues) spans 120-129 (HMHRGKNRSR). A compositionally biased stretch (low complexity) spans 144 to 174 (SSATSAASNTSAGVAPTTTTTSSPAPSYSRP).

It belongs to the GRF family.

Its subcellular location is the nucleus. Its function is as follows. Transcription activator that plays a regulatory role in gibberellin-induced stem elongation. The sequence is that of Growth-regulating factor 1 (GRF1) from Oryza sativa subsp. japonica (Rice).